The sequence spans 447 residues: Signal recognition particle 54 kDa protein (447 aa).

GTP-binding positions include 103-110, 185-189, and 245-248; these read GVQGSGKT, DTAGR, and TKMD.

This sequence belongs to the GTP-binding SRP family. SRP54 subfamily. Part of the signal recognition particle protein translocation system, which is composed of SRP and FtsY. Archaeal SRP consists of a 7S RNA molecule of 300 nucleotides and two protein subunits: SRP54 and SRP19.

It is found in the cytoplasm. The enzyme catalyses GTP + H2O = GDP + phosphate + H(+). Functionally, involved in targeting and insertion of nascent membrane proteins into the cytoplasmic membrane. Binds to the hydrophobic signal sequence of the ribosome-nascent chain (RNC) as it emerges from the ribosomes. The SRP-RNC complex is then targeted to the cytoplasmic membrane where it interacts with the SRP receptor FtsY. This chain is Signal recognition particle 54 kDa protein, found in Saccharolobus solfataricus (strain ATCC 35092 / DSM 1617 / JCM 11322 / P2) (Sulfolobus solfataricus).